The following is a 185-amino-acid chain: Ribosome-recycling factor (185 aa).

This sequence belongs to the RRF family.

It localises to the cytoplasm. Functionally, responsible for the release of ribosomes from messenger RNA at the termination of protein biosynthesis. May increase the efficiency of translation by recycling ribosomes from one round of translation to another. In Geobacillus sp. (strain WCH70), this protein is Ribosome-recycling factor.